A 348-amino-acid chain; its full sequence is Phosphate acyltransferase (348 aa).

The protein belongs to the PlsX family. Homodimer. Probably interacts with PlsY.

Its subcellular location is the cytoplasm. It catalyses the reaction a fatty acyl-[ACP] + phosphate = an acyl phosphate + holo-[ACP]. It functions in the pathway lipid metabolism; phospholipid metabolism. In terms of biological role, catalyzes the reversible formation of acyl-phosphate (acyl-PO(4)) from acyl-[acyl-carrier-protein] (acyl-ACP). This enzyme utilizes acyl-ACP as fatty acyl donor, but not acyl-CoA. The polypeptide is Phosphate acyltransferase (Lactiplantibacillus plantarum (strain ATCC BAA-793 / NCIMB 8826 / WCFS1) (Lactobacillus plantarum)).